The chain runs to 318 residues: Taste receptor type 2 member 60 (318 aa).

Over 1 to 7 (MNGDHMV) the chain is Extracellular. Residues 8-28 (LGSSMTDEKAIILVIILLLLC) form a helical membrane-spanning segment. Over 29–40 (LVAIAGNCFITA) the chain is Cytoplasmic. A helical membrane pass occupies residues 41–61 (ALGMEWVLQRMLLPCDKLLVS). Topologically, residues 62–88 (LGASRFCPQWVVMGKTTYVFLYPTAFP) are extracellular. Residues 89–109 (YNPVLRFLAFQWDLLNAATLW) form a helical membrane-spanning segment. Topologically, residues 110–128 (FSTWLSVFYCVKIATFTHP) are cytoplasmic. The chain crosses the membrane as a helical span at residues 129–149 (VFLWLKHKLSEWVPWMLFSSV). Residues 150 to 183 (GLSSFTTILFFIGNHRVYQSYLRNHLQPWNVTGN) are Extracellular-facing. Residue asparagine 179 is glycosylated (N-linked (GlcNAc...) asparagine). A helical membrane pass occupies residues 184-204 (SIWSYCEKFYLFPLKMITWTM). Topologically, residues 205 to 234 (PTAVFFICMILLITSLGRHMKKALLTNSGF) are cytoplasmic. A helical transmembrane segment spans residues 235–255 (RDPSVQAHIKAMLALLSFAML). Residues 256–264 (FISYFLSLV) are Extracellular-facing. Residues 265-285 (FSAAGIFPPLDFKFWVWESVI) form a helical membrane-spanning segment. Residues 286-318 (YLCAAVHPIILLFSNRRLRAVLKRCRSSRCGTP) lie on the Cytoplasmic side of the membrane.

This sequence belongs to the G-protein coupled receptor T2R family.

It localises to the membrane. In terms of biological role, receptor that may play a role in the perception of bitterness and is gustducin-linked. May play a role in sensing the chemical composition of the gastrointestinal content. The activity of this receptor may stimulate alpha gustducin, mediate PLC-beta-2 activation and lead to the gating of TRPM5. The protein is Taste receptor type 2 member 60 (TAS2R60) of Pongo pygmaeus (Bornean orangutan).